A 733-amino-acid chain; its full sequence is MKVHSLFLMAIFFYLAYTQLVKAQPRDDCQTRCGDVPIDYPFGISTGCYYPGDDSFNITCEEDKPNVLSNIEVLNFNHSGQLRGLIPRSTVCYDQQTNNDFESLWFRLDNLSFSPNNKFTLVGCNAWALLSTFGIQNYSTGCMSLCDTPPPPNSKCNGVGCCRTEVSIPLDSHRIETQPSRFENMTSVEHFNPCSYAFFVEDGMFNFSSLEDLKDLRNVTRFPVLLDWSIGNQTCEQVVGRNICGGNSTCFDSTRGKGYNCKCLQGFDGNPYLSDGCQDINECTTRIHNCSDTSTCENTLGSFHCQCPSGSDLNTTTMSCIDTPKEEPKYLGWTTVLLGTTIGFLIILLTISYIQQKMRHRKNTELRQQFFEQNGGGMLIQRLSGAGPSNVDVKIFTEEGMKEATDGYNESRILGQGGQGTVYKGILQDNSIVAIKKARLGDRSQVEQFINEVLVLSQINHRNVVKLLGCCLETEVPLLVYEFISSGTLFDHLHGSMFDSSLTWEHRLRIAIEVAGTLAYLHSYASIPIIHRDVKTANILLDENLTAKVADFGASRLIPMDQEQLTTMVQGTLGYLDPEYYNTGLLNEKSDVYSFGVVLMELLSGEKALCFERPQSSKHLVSYFVSAMKENRLHEIIDGQVMNEYNQREIQESARIAVECTRIMGEERPSMKEVAAELEALRVKTTKHQWSDQYPKEVEHLLGVQILSTQGDTSSIGYDSIQNVTRLDIETGR.

The first 23 residues, 1 to 23, serve as a signal peptide directing secretion; that stretch reads MKVHSLFLMAIFFYLAYTQLVKA. At 24–330 the chain is on the extracellular side; the sequence is QPRDDCQTRC…IDTPKEEPKY (307 aa). Asparagine 57, asparagine 77, asparagine 110, asparagine 137, asparagine 184, asparagine 206, asparagine 218, asparagine 232, and asparagine 247 each carry an N-linked (GlcNAc...) asparagine glycan. Positions 231–278 constitute an EGF-like 1 domain; the sequence is GNQTCEQVVGRNICGGNSTCFDSTRGKGYNCKCLQGFDGNPYLSDGCQ. Cystine bridges form between cysteine 235–cysteine 250, cysteine 244–cysteine 261, cysteine 263–cysteine 277, cysteine 283–cysteine 296, cysteine 290–cysteine 305, and cysteine 307–cysteine 320. The region spanning 279–321 is the EGF-like 2; calcium-binding domain; the sequence is DINECTTRIHNCSDTSTCENTLGSFHCQCPSGSDLNTTTMSCI. Asparagine 289 carries an N-linked (GlcNAc...) asparagine glycan. A glycan (N-linked (GlcNAc...) asparagine) is linked at asparagine 314. A helical membrane pass occupies residues 331–351; that stretch reads LGWTTVLLGTTIGFLIILLTI. Over 352 to 733 the chain is Cytoplasmic; sequence SYIQQKMRHR…VTRLDIETGR (382 aa). Threonine 397 carries the phosphothreonine modification. The Protein kinase domain occupies 408–691; sequence YNESRILGQG…RVKTTKHQWS (284 aa). ATP is bound by residues 414-422 and lysine 436; that span reads LGQGGQGTV. Tyrosine 481 carries the post-translational modification Phosphotyrosine. The Proton acceptor role is filled by aspartate 533. Residues threonine 567 and threonine 572 each carry the phosphothreonine modification. The residue at position 580 (tyrosine 580) is a Phosphotyrosine.

Belongs to the protein kinase superfamily. Ser/Thr protein kinase family. As to expression, predominantly expressed in green tissues such as stems and leaves.

It is found in the membrane. It catalyses the reaction L-seryl-[protein] + ATP = O-phospho-L-seryl-[protein] + ADP + H(+). The enzyme catalyses L-threonyl-[protein] + ATP = O-phospho-L-threonyl-[protein] + ADP + H(+). Serine/threonine-protein kinase that may function as a signaling receptor of extracellular matrix component. Binding to pectin may have significance in the control of cell expansion, morphogenesis and development. The sequence is that of Wall-associated receptor kinase 5 (WAK5) from Arabidopsis thaliana (Mouse-ear cress).